The primary structure comprises 366 residues: Chorismate synthase (366 aa).

Residues Arg-47 and Arg-53 each contribute to the NADP(+) site. FMN is bound by residues 124–126, Gly-286, 301–305, and Arg-327; these read RSS and KPTAT.

Belongs to the chorismate synthase family. Homotetramer. FMNH2 is required as a cofactor.

The enzyme catalyses 5-O-(1-carboxyvinyl)-3-phosphoshikimate = chorismate + phosphate. It participates in metabolic intermediate biosynthesis; chorismate biosynthesis; chorismate from D-erythrose 4-phosphate and phosphoenolpyruvate: step 7/7. Its function is as follows. Catalyzes the anti-1,4-elimination of the C-3 phosphate and the C-6 proR hydrogen from 5-enolpyruvylshikimate-3-phosphate (EPSP) to yield chorismate, which is the branch point compound that serves as the starting substrate for the three terminal pathways of aromatic amino acid biosynthesis. This reaction introduces a second double bond into the aromatic ring system. This Microcystis aeruginosa (strain NIES-843 / IAM M-2473) protein is Chorismate synthase.